A 258-amino-acid chain; its full sequence is 5'-nucleotidase SurE (258 aa).

A divalent metal cation contacts are provided by Asp18, Asp19, Ser49, and Asn102.

The protein belongs to the SurE nucleotidase family. A divalent metal cation is required as a cofactor.

It is found in the cytoplasm. The enzyme catalyses a ribonucleoside 5'-phosphate + H2O = a ribonucleoside + phosphate. Its function is as follows. Nucleotidase that shows phosphatase activity on nucleoside 5'-monophosphates. The polypeptide is 5'-nucleotidase SurE (Vibrio parahaemolyticus serotype O3:K6 (strain RIMD 2210633)).